The chain runs to 382 residues: cAMP-dependent protein kinase type I-alpha regulatory subunit (382 aa).

Ala-2 carries the post-translational modification N-acetylalanine. A dimerization and phosphorylation region spans residues 2 to 136; the sequence is ATSSSSSSEE…AALAKAIEKN (135 aa). The disordered stretch occupies residues 62 to 96; it reads TKQLLNQQKSGSRSDSREDEISPPPPMNPVVKGRR. A Pseudophosphorylation motif motif is present at residues 97–101; it reads RRGAI. 3',5'-cyclic AMP is bound by residues 138-255, Glu-203, Arg-212, 256-382, Glu-327, and Arg-336; these read LFAH…SKVS and ILES…SLSV.

Belongs to the cAMP-dependent kinase regulatory chain family. As to quaternary structure, the inactive form of the enzyme is composed of two regulatory chains and two catalytic chains. Activation by cAMP produces two active catalytic monomers and a regulatory dimer that binds four cAMP molecules. In terms of processing, the pseudophosphorylation site binds to the substrate-binding region of the catalytic chain but is not phosphorylated. The physiological significance of phosphorylations by other kinases is unclear.

Its subcellular location is the cell membrane. This chain is cAMP-dependent protein kinase type I-alpha regulatory subunit (PRKAR1A), found in Gallus gallus (Chicken).